Consider the following 478-residue polypeptide: Oxidative stress-induced growth inhibitor 1 (478 aa).

Residue Ser-12 is modified to Phosphoserine.

Belongs to the OKL38 family. NADPH serves as cofactor.

The protein resides in the midbody. In terms of biological role, monooxygenase catalytic activity. Involved in regulation of cytokinesis; promotes RHOA activity, probably acting locally at the midbody in late cytokinesis. Monooxygenase activity is involved in stabilizing transient structures between daughter cells, termed intercellular bridges, before abscission. Regulates differentiation and proliferation through the regulation of cell death. The polypeptide is Oxidative stress-induced growth inhibitor 1 (Mus musculus (Mouse)).